The chain runs to 118 residues: uncharacterized protein (118 aa).

This is an uncharacterized protein from Saccharomyces cerevisiae (strain ATCC 204508 / S288c) (Baker's yeast).